A 513-amino-acid chain; its full sequence is ATP synthase subunit alpha 1 (513 aa).

169 to 176 (GDRQTGKT) lines the ATP pocket.

The protein belongs to the ATPase alpha/beta chains family. F-type ATPases have 2 components, CF(1) - the catalytic core - and CF(0) - the membrane proton channel. CF(1) has five subunits: alpha(3), beta(3), gamma(1), delta(1), epsilon(1). CF(0) has three main subunits: a(1), b(2) and c(9-12). The alpha and beta chains form an alternating ring which encloses part of the gamma chain. CF(1) is attached to CF(0) by a central stalk formed by the gamma and epsilon chains, while a peripheral stalk is formed by the delta and b chains.

It localises to the cell inner membrane. The catalysed reaction is ATP + H2O + 4 H(+)(in) = ADP + phosphate + 5 H(+)(out). Functionally, produces ATP from ADP in the presence of a proton gradient across the membrane. The alpha chain is a regulatory subunit. In Photobacterium profundum (strain SS9), this protein is ATP synthase subunit alpha 1.